Here is a 322-residue protein sequence, read N- to C-terminus: Ubiquinone biosynthesis O-methyltransferase, mitochondrial (322 aa).

Residues 1–37 constitute a mitochondrion transit peptide; that stretch reads MLASVRVNQLQRLLLSARRLSSSPIIPPSRLLHQRLF. The tract at residues 46-75 is disordered; it reads AASFSSSHPKIQTLEGKASNKSRSTSSTTS. S-adenosyl-L-methionine contacts are provided by Arg-108, Gly-139, Asp-160, and Leu-205. Positions 206, 209, and 210 each coordinate Mg(2+).

Belongs to the class I-like SAM-binding methyltransferase superfamily. UbiG/COQ3 family. Component of a multi-subunit COQ enzyme complex. The cofactor is Mg(2+).

Its subcellular location is the mitochondrion inner membrane. The enzyme catalyses a 3,4-dihydroxy-5-(all-trans-polyprenyl)benzoate + S-adenosyl-L-methionine = a 4-hydroxy-3-methoxy-5-(all-trans-polyprenyl)benzoate + S-adenosyl-L-homocysteine + H(+). The catalysed reaction is a 3-demethylubiquinone + S-adenosyl-L-methionine = a ubiquinone + S-adenosyl-L-homocysteine. It carries out the reaction a 3-demethylubiquinol + S-adenosyl-L-methionine = a ubiquinol + S-adenosyl-L-homocysteine + H(+). It participates in cofactor biosynthesis; ubiquinone biosynthesis. Its function is as follows. O-methyltransferase required for two non-consecutive steps during ubiquinone biosynthesis. Catalyzes the 2 O-methylation of 3,4-dihydroxy-5-(all-trans-polyprenyl)benzoic acid into 4-hydroxy-3-methoxy-5-(all-trans-polyprenyl)benzoic acid. Also catalyzes the last step of ubiquinone biosynthesis by mediating methylation of 3-demethylubiquinone into ubiquinone. Also able to mediate the methylation of 3-demethylubiquinol into ubiquinol. This is Ubiquinone biosynthesis O-methyltransferase, mitochondrial from Arabidopsis thaliana (Mouse-ear cress).